A 352-amino-acid polypeptide reads, in one-letter code: tRNA pseudouridine synthase D (352 aa).

Residue Asp-81 is the Nucleophile of the active site. The 147-residue stretch at 157 to 303 folds into the TRUD domain; the sequence is GVPNYFGLQR…MLHERRILRL (147 aa).

Belongs to the pseudouridine synthase TruD family.

It carries out the reaction uridine(13) in tRNA = pseudouridine(13) in tRNA. Its function is as follows. Responsible for synthesis of pseudouridine from uracil-13 in transfer RNAs. The sequence is that of tRNA pseudouridine synthase D from Azotobacter vinelandii (strain DJ / ATCC BAA-1303).